Consider the following 314-residue polypeptide: 4-hydroxy-3-methylbut-2-enyl diphosphate reductase (314 aa).

C12 serves as a coordination point for [4Fe-4S] cluster. (2E)-4-hydroxy-3-methylbut-2-enyl diphosphate-binding residues include H43 and H81. Residues H43 and H81 each coordinate dimethylallyl diphosphate. Isopentenyl diphosphate is bound by residues H43 and H81. Residue C103 coordinates [4Fe-4S] cluster. H131 lines the (2E)-4-hydroxy-3-methylbut-2-enyl diphosphate pocket. H131 is a binding site for dimethylallyl diphosphate. Position 131 (H131) interacts with isopentenyl diphosphate. E133 (proton donor) is an active-site residue. T170 contacts (2E)-4-hydroxy-3-methylbut-2-enyl diphosphate. C198 is a binding site for [4Fe-4S] cluster. The (2E)-4-hydroxy-3-methylbut-2-enyl diphosphate site is built by S226, N228, and S271. Dimethylallyl diphosphate-binding residues include S226, N228, and S271. Positions 226, 228, and 271 each coordinate isopentenyl diphosphate.

The protein belongs to the IspH family. [4Fe-4S] cluster is required as a cofactor.

The enzyme catalyses isopentenyl diphosphate + 2 oxidized [2Fe-2S]-[ferredoxin] + H2O = (2E)-4-hydroxy-3-methylbut-2-enyl diphosphate + 2 reduced [2Fe-2S]-[ferredoxin] + 2 H(+). The catalysed reaction is dimethylallyl diphosphate + 2 oxidized [2Fe-2S]-[ferredoxin] + H2O = (2E)-4-hydroxy-3-methylbut-2-enyl diphosphate + 2 reduced [2Fe-2S]-[ferredoxin] + 2 H(+). The protein operates within isoprenoid biosynthesis; dimethylallyl diphosphate biosynthesis; dimethylallyl diphosphate from (2E)-4-hydroxy-3-methylbutenyl diphosphate: step 1/1. Its pathway is isoprenoid biosynthesis; isopentenyl diphosphate biosynthesis via DXP pathway; isopentenyl diphosphate from 1-deoxy-D-xylulose 5-phosphate: step 6/6. Its function is as follows. Catalyzes the conversion of 1-hydroxy-2-methyl-2-(E)-butenyl 4-diphosphate (HMBPP) into a mixture of isopentenyl diphosphate (IPP) and dimethylallyl diphosphate (DMAPP). Acts in the terminal step of the DOXP/MEP pathway for isoprenoid precursor biosynthesis. This chain is 4-hydroxy-3-methylbut-2-enyl diphosphate reductase, found in Bacillus pumilus (strain SAFR-032).